The primary structure comprises 373 residues: Quinolinate synthase (373 aa).

2 residues coordinate iminosuccinate: H46 and S63. C109 serves as a coordination point for [4Fe-4S] cluster. Iminosuccinate contacts are provided by residues 142 to 144 (YMN) and S163. C232 contributes to the [4Fe-4S] cluster binding site. Iminosuccinate-binding positions include 258 to 260 (HPE) and T275. C324 provides a ligand contact to [4Fe-4S] cluster.

It belongs to the quinolinate synthase family. Type 3 subfamily. [4Fe-4S] cluster serves as cofactor.

It is found in the cytoplasm. The enzyme catalyses iminosuccinate + dihydroxyacetone phosphate = quinolinate + phosphate + 2 H2O + H(+). The protein operates within cofactor biosynthesis; NAD(+) biosynthesis; quinolinate from iminoaspartate: step 1/1. Catalyzes the condensation of iminoaspartate with dihydroxyacetone phosphate to form quinolinate. The polypeptide is Quinolinate synthase (Acidobacterium capsulatum (strain ATCC 51196 / DSM 11244 / BCRC 80197 / JCM 7670 / NBRC 15755 / NCIMB 13165 / 161)).